The following is a 172-amino-acid chain: Translationally-controlled tumor protein homolog (172 aa).

Positions 1 to 172 (MIIYRDCISQ…FKDGLEIEKC (172 aa)) constitute a TCTP domain. At S46 the chain carries Phosphoserine; by PLK1.

This sequence belongs to the TCTP family.

Its subcellular location is the cytoplasm. Functionally, involved in calcium binding and microtubule stabilization. The protein is Translationally-controlled tumor protein homolog (TPT1) of Gallus gallus (Chicken).